Here is a 331-residue protein sequence, read N- to C-terminus: Ferredoxin--NADP reductase (331 aa).

The FAD site is built by threonine 20, glutamate 39, glutamine 47, tyrosine 52, valine 92, phenylalanine 126, aspartate 287, and serine 328.

It belongs to the ferredoxin--NADP reductase type 2 family. Homodimer. FAD serves as cofactor.

It carries out the reaction 2 reduced [2Fe-2S]-[ferredoxin] + NADP(+) + H(+) = 2 oxidized [2Fe-2S]-[ferredoxin] + NADPH. The chain is Ferredoxin--NADP reductase from Bacillus cereus (strain ZK / E33L).